The chain runs to 88 residues: Apolipoprotein C-I (88 aa).

An N-terminal signal peptide occupies residues 1 to 26; sequence MRLFLSLPVLVVVLAMVLEGPAPTQA.

This sequence belongs to the apolipoprotein C1 family.

It is found in the secreted. In terms of biological role, inhibitor of lipoprotein binding to the low density lipoprotein (LDL) receptor, LDL receptor-related protein, and very low density lipoprotein (VLDL) receptor. Associates with high density lipoproteins (HDL) and the triacylglycerol-rich lipoproteins in the plasma and makes up about 10% of the protein of the VLDL and 2% of that of HDL. Appears to interfere directly with fatty acid uptake and is also the major plasma inhibitor of cholesteryl ester transfer protein (CETP). Binds free fatty acids and reduces their intracellular esterification. Modulates the interaction of APOE with beta-migrating VLDL and inhibits binding of beta-VLDL to the LDL receptor-related protein. This is Apolipoprotein C-I (APOC1) from Phoca vitulina (Harbor seal).